A 241-amino-acid chain; its full sequence is NEP1-interacting protein 2 (241 aa).

The disordered stretch occupies residues methionine 1–serine 20. Topologically, residues methionine 1–histidine 36 are lumenal, thylakoid. The helical transmembrane segment at phenylalanine 37–leucine 57 threads the bilayer. Topologically, residues valine 58–serine 76 are stromal. Residues glycine 77–phenylalanine 97 form a helical membrane-spanning segment. Residues glutamate 98 to serine 109 lie on the Lumenal, thylakoid side of the membrane. A helical membrane pass occupies residues glycine 110–valine 130. At arginine 131 to isoleucine 241 the chain is on the stromal side. An RING-type; atypical zinc finger spans residues cysteine 196 to arginine 238.

Belongs to the RING-type zinc finger family. NIP subfamily. Interacts with RPOT2.

The protein resides in the plastid. Its subcellular location is the chloroplast thylakoid membrane. Its function is as follows. Intrinsic thylakoid membrane protein that fixes RPOT2 on the stromal side of the thylakoid membrane. The sequence is that of NEP1-interacting protein 2 (NIP2) from Arabidopsis thaliana (Mouse-ear cress).